The following is a 345-amino-acid chain: S-adenosylmethionine:tRNA ribosyltransferase-isomerase (345 aa).

It belongs to the QueA family. As to quaternary structure, monomer.

Its subcellular location is the cytoplasm. The enzyme catalyses 7-aminomethyl-7-carbaguanosine(34) in tRNA + S-adenosyl-L-methionine = epoxyqueuosine(34) in tRNA + adenine + L-methionine + 2 H(+). It participates in tRNA modification; tRNA-queuosine biosynthesis. Its function is as follows. Transfers and isomerizes the ribose moiety from AdoMet to the 7-aminomethyl group of 7-deazaguanine (preQ1-tRNA) to give epoxyqueuosine (oQ-tRNA). The polypeptide is S-adenosylmethionine:tRNA ribosyltransferase-isomerase (Shewanella baltica (strain OS155 / ATCC BAA-1091)).